The primary structure comprises 61 residues: Putative antitoxin VapB13 (61 aa).

It belongs to the UPF0165 family.

In terms of biological role, possibly the antitoxin component of a type II toxin-antitoxin (TA) system. Its cognate toxin is VapC13 (Potential). This chain is Putative antitoxin VapB13 (vapB13), found in Archaeoglobus fulgidus (strain ATCC 49558 / DSM 4304 / JCM 9628 / NBRC 100126 / VC-16).